The chain runs to 408 residues: Phosphoglycerate kinase (408 aa).

Residues 22 to 24, Arg-39, 60 to 63, Arg-117, and Arg-157 each bind substrate; these read DIN and HQSR. ATP-binding positions include Glu-332 and 358 to 361; that span reads GGHT.

Belongs to the phosphoglycerate kinase family. As to quaternary structure, monomer.

The protein resides in the cytoplasm. The catalysed reaction is (2R)-3-phosphoglycerate + ATP = (2R)-3-phospho-glyceroyl phosphate + ADP. Its pathway is carbohydrate degradation; glycolysis; pyruvate from D-glyceraldehyde 3-phosphate: step 2/5. The polypeptide is Phosphoglycerate kinase (pgk) (Thermoplasma acidophilum (strain ATCC 25905 / DSM 1728 / JCM 9062 / NBRC 15155 / AMRC-C165)).